The primary structure comprises 372 residues: Tubby-like F-box protein 9 (372 aa).

The tract at residues 1-51 (MALWRCSSSWLSSVSRSSGGVGGGESKVSPEIAPVSGGEGEGEEEEGEEER) is disordered. Residues 7 to 18 (SSSWLSSVSRSS) show a composition bias toward low complexity. The span at 40 to 49 (GEGEEEEGEE) shows a compositional bias: acidic residues. One can recognise an F-box domain in the interval 50–105 (ERWSRLLPELLTEIMRRVDAGAERWPPRRDVVACACVCRRWRDAAVSVVRPPLECG).

Belongs to the TUB family. As to expression, ubiquitous.

The chain is Tubby-like F-box protein 9 (TULP9) from Oryza sativa subsp. japonica (Rice).